Reading from the N-terminus, the 327-residue chain is Succinylglutamate desuccinylase (327 aa).

Residues His-53, Glu-56, and His-146 each contribute to the Zn(2+) site. Glu-209 is an active-site residue.

Belongs to the AspA/AstE family. Succinylglutamate desuccinylase subfamily. Zn(2+) serves as cofactor.

The catalysed reaction is N-succinyl-L-glutamate + H2O = L-glutamate + succinate. The protein operates within amino-acid degradation; L-arginine degradation via AST pathway; L-glutamate and succinate from L-arginine: step 5/5. In terms of biological role, transforms N(2)-succinylglutamate into succinate and glutamate. The sequence is that of Succinylglutamate desuccinylase from Serratia proteamaculans (strain 568).